The following is a 128-amino-acid chain: Large-conductance mechanosensitive channel (128 aa).

2 consecutive transmembrane segments (helical) span residues 10–30 (FAMR…SAFG) and 76–96 (GLFI…FMMI).

The protein belongs to the MscL family. In terms of assembly, homopentamer.

The protein resides in the cell inner membrane. Functionally, channel that opens in response to stretch forces in the membrane lipid bilayer. May participate in the regulation of osmotic pressure changes within the cell. In Haemophilus influenzae (strain PittEE), this protein is Large-conductance mechanosensitive channel.